Here is a 197-residue protein sequence, read N- to C-terminus: GTP cyclohydrolase-2 (197 aa).

Residue 50–54 (RIHSE) coordinates GTP. Residues Cys55, Cys66, and Cys68 each coordinate Zn(2+). Residues Gln71, 93-95 (EGR), and Thr115 contribute to the GTP site. The Proton acceptor role is filled by Asp127. Arg129 acts as the Nucleophile in catalysis. 2 residues coordinate GTP: Thr150 and Lys155.

Belongs to the GTP cyclohydrolase II family. The cofactor is Zn(2+).

It catalyses the reaction GTP + 4 H2O = 2,5-diamino-6-hydroxy-4-(5-phosphoribosylamino)-pyrimidine + formate + 2 phosphate + 3 H(+). It participates in cofactor biosynthesis; riboflavin biosynthesis; 5-amino-6-(D-ribitylamino)uracil from GTP: step 1/4. In terms of biological role, catalyzes the conversion of GTP to 2,5-diamino-6-ribosylamino-4(3H)-pyrimidinone 5'-phosphate (DARP), formate and pyrophosphate. In Aeromonas hydrophila subsp. hydrophila (strain ATCC 7966 / DSM 30187 / BCRC 13018 / CCUG 14551 / JCM 1027 / KCTC 2358 / NCIMB 9240 / NCTC 8049), this protein is GTP cyclohydrolase-2.